Consider the following 164-residue polypeptide: MKWKALFTAAILQAQLPITEAQSFGLLDPKLCYLLDGILFIYGVILTALFLRVKFSRSADAPAYQQGQNQLYNELNLGRREEYDVLDKRRGRDPEMGGKPQRRKNPQEGLYNELQKDKMAEAYSEIGMKGERRRGKGHDGLYQGLSTATKDTYDALHMQALPPR.

The N-terminal stretch at 1 to 21 (MKWKALFTAAILQAQLPITEA) is a signal peptide. Over 22 to 30 (QSFGLLDPK) the chain is Extracellular. Residues 31 to 51 (LCYLLDGILFIYGVILTALFL) form a helical membrane-spanning segment. Residues 52-164 (RVKFSRSADA…ALHMQALPPR (113 aa)) lie on the Cytoplasmic side of the membrane. Phosphoserine is present on Ser-58. 3 consecutive ITAM domains span residues 61–89 (APAY…LDKR), 100–128 (PQRR…EIGM), and 131–159 (ERRR…LHMQ). Phosphotyrosine occurs at positions 64, 72, 83, 111, 123, 142, and 153. Residues 83-96 (YDVLDKRRGRDPEM) are compositionally biased toward basic and acidic residues. Residues 83–111 (YDVLDKRRGRDPEMGGKPQRRKNPQEGLY) form a disordered region. The tract at residues 128 to 154 (MKGERRRGKGHDGLYQGLSTATKDTYD) is disordered.

It belongs to the CD3Z/FCER1G family. In terms of assembly, the TCR-CD3 complex is composed of a CD3D/CD3E and a CD3G/CD3E heterodimers that preferentially associate with TCRalpha and TCRbeta, respectively, to form TCRalpha/CD3E/CD3G and TCRbeta/CD3G/CD3E trimers. In turn, the hexamer interacts with CD3Z homodimer to form the TCR-CD3 complex. Alternatively, TCRalpha and TCRbeta can be replaced by TCRgamma and TCRdelta. Interacts with SLA. Interacts with TRAT1. Interacts with DOCK2. Interacts with SLA2. Interacts with SHB. Interacts with ZAP70. Interacts (tyrosine phosphorylated) with SHC1 (via SH2 domain). Interacts with PTPRC. Interacts with CRK; this interaction regulates CD3Z phosphorylation. Interacts (on T cell side) with CD81, ICAM1 and CD9 at immunological synapses between antigen-presenting cells and T cells. Interacts with CD160. Interacts with LY6E. The signaling subunit of immunoglobulin gamma (IgG) Fc receptor complex. As a homodimer or a heterodimer with FCER1G, associates with the ligand binding subunit FCGR3A (via transmembrane domain); this interaction is a prerequisite for Fc receptor complex expression on the cell surface. Interacts with CD5. As to quaternary structure, (Microbial infection) Interacts with HIV-1 Nef; this interaction up-regulates the expression of the Fas ligand (FASLG) at the cell surface. (Microbial infection) Interacts with HIV-2 Nef protein; this interaction induces down-regulation of cell surface TCR/CD3 complexes. Post-translationally, phosphorylated on Tyr residues after T-cell receptor triggering by LCK in association with CD4/CD8. In terms of tissue distribution, CD3Z is expressed in normal lymphoid tissue and in peripheral blood mononuclear cells (PBMCs).

The protein resides in the cell membrane. Functionally, part of the TCR-CD3 complex present on T-lymphocyte cell surface that plays an essential role in adaptive immune response. When antigen presenting cells (APCs) activate T-cell receptor (TCR), TCR-mediated signals are transmitted across the cell membrane by the CD3 chains CD3D, CD3E, CD3G and CD3Z. All CD3 chains contain immunoreceptor tyrosine-based activation motifs (ITAMs) in their cytoplasmic domain. Upon TCR engagement, these motifs become phosphorylated by Src family protein tyrosine kinases LCK and FYN, resulting in the activation of downstream signaling pathways. CD3Z ITAMs phosphorylation creates multiple docking sites for the protein kinase ZAP70 leading to ZAP70 phosphorylation and its conversion into a catalytically active enzyme. Plays an important role in intrathymic T-cell differentiation. Additionally, participates in the activity-dependent synapse formation of retinal ganglion cells (RGCs) in both the retina and dorsal lateral geniculate nucleus (dLGN). This is T-cell surface glycoprotein CD3 zeta chain (CD247) from Homo sapiens (Human).